Consider the following 1491-residue polypeptide: Terminal uridylyltransferase 7 (1491 aa).

A Phosphothreonine modification is found at Thr-64. Phosphoserine occurs at positions 132 and 172. The segment at 165–203 (MSEMEAGSPENKKQRSRPRKPRRTRTEDSEQDGDLDGPV) is disordered. Basic residues predominate over residues 178 to 187 (QRSRPRKPRR). The Matrin-type zinc-finger motif lies at 244-274 (YTCKLCDALIDSIPFAHKHIKEKRHKKNLKE). In terms of domain architecture, PAP-associated 1 spans 551-600 (VGQLWVELLRFYALEFNLADLVISIRVKELISRESKDWPKKRIAIEDPYS). Phosphoserine occurs at positions 600 and 747. Disordered regions lie at residues 740-774 (AELPETGSDNEEVRRKTKHPLSTDDQGLSSSKHPE) and 834-911 (QSRT…CGEN). A compositionally biased stretch (acidic residues) spans 844–857 (DDEEEEEEEEEEEE). A Phosphothreonine modification is found at Thr-865. The span at 885–897 (GEEDALSEEDDLA) shows a compositional bias: acidic residues. Ser-891 bears the Phosphoserine mark. Positions 947–1491 (RKLTFTKGKS…ASVKRTQQES (545 aa)) are sufficient for monouridylation activity. A CCHC-type 1 zinc finger spans residues 959-976 (VVCSLCKREGHLKKDCPE). Residues 1043–1046 (SSKN), 1053–1056 (SDLD), Asn-1126, Lys-1148, 1166–1170 (SYAYT), and His-1282 contribute to the UTP site. Mg(2+) is bound by residues Asp-1054 and Asp-1056. The PAP-associated 2 domain occupies 1230 to 1282 (VGQLWLGLLRFYTEEFDFKEHVISIRRKSLLTTFKKQWTSKYIVIEDPFDLNH). Residues 1341-1358 (RCCRICGKIGHFMKDCPM) form a CCHC-type 2 zinc finger. Disordered stretches follow at residues 1362-1399 (VRRRRDQEDTPNQRYSESKEKRSKEDKEIQNKYTEKEV) and 1463-1491 (PQFKGSPGSLSSKYMTQGRASVKRTQQES). Residues 1377 to 1399 (SESKEKRSKEDKEIQNKYTEKEV) are compositionally biased toward basic and acidic residues. A CCHC-type 3 zinc finger spans residues 1447 to 1464 (KRCFICGREGHIKKECPQ). Residues 1470 to 1481 (GSLSSKYMTQGR) are compositionally biased toward polar residues.

It belongs to the DNA polymerase type-B-like family. Mg(2+) is required as a cofactor. It depends on Mn(2+) as a cofactor.

Its subcellular location is the cytoplasm. It catalyses the reaction RNA(n) + UTP = RNA(n)-3'-uridine ribonucleotide + diphosphate. Its function is as follows. Uridylyltransferase that mediates the terminal uridylation of mRNAs with short (less than 25 nucleotides) poly(A) tails, hence facilitating global mRNA decay. Essential for both oocyte maturation and fertility. Through 3' terminal uridylation of mRNA, sculpts, with TUT7, the maternal transcriptome by eliminating transcripts during oocyte growth. Involved in microRNA (miRNA)-induced gene silencing through uridylation of deadenylated miRNA targets. Also acts as a suppressor of miRNA biogenesis by mediating the terminal uridylation of miRNA precursors, including that of let-7 (pre-let-7). Uridylated pre-let-7 RNA is not processed by Dicer and undergo degradation. Pre-let-7 uridylation is strongly enhanced in the presence of LIN28A. Due to functional redundancy between ZCCHC6 and ZCCHC11, the identification of the specific role of each of these proteins is difficult. Involved in microRNA (miRNA)-induced gene silencing through uridylation of deadenylated miRNA targets. Also functions as an integral regulator of microRNA biogenesiS using 3 different uridylation mechanisms. Acts as a suppressor of miRNA biogenesis by mediating the terminal uridylation of some miRNA precursors, including that of let-7 (pre-let-7). Uridylated pre-let-7 RNA is not processed by Dicer and undergo degradation. Pre-let-7 oligouridylation is strongly enhanced in the presence of LIN28A. In the absence of LIN28A, TUT7 and TUT4 monouridylate group II pre-miRNAs, which includes most of pre-let7 members, that shapes an optimal 3' end overhang for efficient processing. Add oligo-U tails to truncated pre-miRNAS with a 5' overhang which may promote rapid degradation of non-functional pre-miRNA species. Does not play a role in replication-dependent histone mRNA degradation. Due to functional redundancy between TUT4 and TUT7, the identification of the specific role of each of these proteins is difficult. TUT4 and TUT7 restrict retrotransposition of long interspersed element-1 (LINE-1) in cooperation with MOV10 counteracting the RNA chaperonne activity of L1RE1. TUT7 uridylates LINE-1 mRNAs in the cytoplasm which inhibits initiation of reverse transcription once in the nucleus, whereas uridylation by TUT4 destabilizes mRNAs in cytoplasmic ribonucleoprotein granules. This is Terminal uridylyltransferase 7 from Mus musculus (Mouse).